The chain runs to 187 residues: UPF0215 protein PAE0952 (187 aa).

This sequence belongs to the UPF0215 family.

The polypeptide is UPF0215 protein PAE0952 (Pyrobaculum aerophilum (strain ATCC 51768 / DSM 7523 / JCM 9630 / CIP 104966 / NBRC 100827 / IM2)).